A 354-amino-acid polypeptide reads, in one-letter code: Replication-associated protein (354 aa).

A CRESS-DNA virus Rep endonuclease domain is found at 11–114 (LHRNANTFLT…PLAVFERGTF (104 aa)). The RCR-1 signature appears at 18-21 (FLTY). A divalent metal cation is bound by residues Glu-52, His-60, and His-62. Residues 60–62 (HLH) carry the RCR-2 motif. Tyr-100 (for DNA cleavage activity) is an active-site residue. Positions 100-103 (YILK) match the RCR-3 motif. An a divalent metal cation-binding site is contributed by Glu-104. The oligomerization stretch occupies residues 174 to 186 (SANKLFPDIQEEF). Residue 228–235 (GPTRTGKS) coordinates ATP. The transactivation stretch occupies residues 251-269 (VDWSSYNEDAIYNIVDDIP). A Nuclear localization signal motif is present at residues 291–302 (KYGKKKKVQMKS).

It belongs to the geminiviridae Rep protein family. Homooligomer. Rep binds to repeated DNA motifs (iterons). Forms the O-complex, which is a Rep-DNA complex involved in the initiation of RCR. Part of the C- and V-complexes which are RepA-Rep-DNA complexes involved in the c-sense and v-sense transcription. It depends on Mg(2+) as a cofactor. The cofactor is Mn(2+).

The protein localises to the host nucleus. In terms of biological role, essential for the replication of viral ssDNA. The closed circular ssDNA genome is first converted to a superhelical dsDNA. Rep binds a specific region at the genome origin of replication. It introduces an endonucleolytic nick within the conserved sequence 5'-TAATATTAC-3' in the intergenic region of the genome present in all geminiviruses, thereby initiating the rolling circle replication (RCR). Following cleavage, binds covalently to the 5'-phosphate of DNA as a tyrosyl ester. The cleavage gives rise to a free 3'-OH that serves as a primer for the cellular DNA polymerase. The polymerase synthesizes the (+) strand DNA by rolling circle mechanism. After one round of replication, a Rep-catalyzed nucleotidyl transfer reaction releases a circular single-stranded virus genome, thereby terminating the replication. Displays origin-specific DNA cleavage, nucleotidyl transferase, ATPase and helicase activities. Acts as an inhibitor of C-sense gene transcription. The polypeptide is Replication-associated protein (Avena sativa (Oat)).